A 357-amino-acid chain; its full sequence is UPF0283 membrane protein HSM_0945 (357 aa).

The next 3 membrane-spanning stretches (helical) occupy residues 67 to 87 (LMATICLFSCGILAQSVQWLV), 96 to 116 (IAFVFAMVSLFLVLLGLGTII), and 213 to 233 (AVESALIVAVSPLAIVDMFFI).

The protein belongs to the UPF0283 family.

It localises to the cell inner membrane. The chain is UPF0283 membrane protein HSM_0945 from Histophilus somni (strain 2336) (Haemophilus somnus).